The chain runs to 180 residues: 3-hydroxyanthranilate 3,4-dioxygenase (180 aa).

Arg-44 provides a ligand contact to O2. His-48, Glu-54, and His-92 together coordinate Fe cation. A substrate-binding site is contributed by Glu-54. 2 residues coordinate substrate: Arg-96 and Glu-106. Positions 121, 124, 158, and 161 each coordinate a divalent metal cation.

The protein belongs to the 3-HAO family. Fe(2+) is required as a cofactor.

The protein resides in the cytoplasm. The catalysed reaction is 3-hydroxyanthranilate + O2 = (2Z,4Z)-2-amino-3-carboxymuconate 6-semialdehyde. It functions in the pathway cofactor biosynthesis; NAD(+) biosynthesis; quinolinate from L-kynurenine: step 3/3. Its function is as follows. Catalyzes the oxidative ring opening of 3-hydroxyanthranilate to 2-amino-3-carboxymuconate semialdehyde, which spontaneously cyclizes to quinolinate. This chain is 3-hydroxyanthranilate 3,4-dioxygenase (bna1), found in Neurospora crassa (strain ATCC 24698 / 74-OR23-1A / CBS 708.71 / DSM 1257 / FGSC 987).